A 427-amino-acid polypeptide reads, in one-letter code: Glutamyl-tRNA reductase (427 aa).

Substrate is bound by residues 49–52 (TCNR), Ser101, 106–108 (EPQ), and Gln112. The Nucleophile role is filled by Cys50. 181 to 186 (GAGETI) is a binding site for NADP(+). Residues 407–427 (FPATPGYRHPPVRPDDADPAP) are disordered. A compositionally biased stretch (basic and acidic residues) spans 418-427 (VRPDDADPAP).

The protein belongs to the glutamyl-tRNA reductase family. In terms of assembly, homodimer.

The enzyme catalyses (S)-4-amino-5-oxopentanoate + tRNA(Glu) + NADP(+) = L-glutamyl-tRNA(Glu) + NADPH + H(+). Its pathway is porphyrin-containing compound metabolism; protoporphyrin-IX biosynthesis; 5-aminolevulinate from L-glutamyl-tRNA(Glu): step 1/2. In terms of biological role, catalyzes the NADPH-dependent reduction of glutamyl-tRNA(Glu) to glutamate 1-semialdehyde (GSA). The protein is Glutamyl-tRNA reductase of Stenotrophomonas maltophilia (strain R551-3).